Consider the following 298-residue polypeptide: tRNA pseudouridine synthase B (298 aa).

The Nucleophile role is filled by Asp-39.

The protein belongs to the pseudouridine synthase TruB family. Type 1 subfamily.

It catalyses the reaction uridine(55) in tRNA = pseudouridine(55) in tRNA. In terms of biological role, responsible for synthesis of pseudouridine from uracil-55 in the psi GC loop of transfer RNAs. The sequence is that of tRNA pseudouridine synthase B from Lactobacillus delbrueckii subsp. bulgaricus (strain ATCC BAA-365 / Lb-18).